Consider the following 500-residue polypeptide: UBX domain-containing protein 5 (500 aa).

Over residues 50 to 61 (SNNTPTPSNSTP) the composition is skewed to low complexity. Positions 50–70 (SNNTPTPSNSTPMAPTSVDSD) are disordered. Residue S139 is modified to Phosphoserine. Disordered stretches follow at residues 142-169 (NQRL…EEND) and 371-399 (ESLN…QEPD). Low complexity predominate over residues 148–161 (TNTNTYINDNSSDS). The UBX domain maps to 415-493 (KPGITTRIQI…GLKNSSLLLE (79 aa)).

Interacts with CDC48.

Its subcellular location is the nucleus. The protein resides in the cytoplasm. In terms of biological role, involved in CDC48-dependent protein degradation through the ubiquitin/proteasome pathway. The protein is UBX domain-containing protein 5 (UBX5) of Saccharomyces cerevisiae (strain ATCC 204508 / S288c) (Baker's yeast).